Consider the following 367-residue polypeptide: Damage-control phosphatase At2g17340 (367 aa).

Methionine 1 is subject to N-acetylmethionine. Residues aspartate 220, asparagine 221, and aspartate 256 each contribute to the Mn(2+) site. The Subfamily II EGMGR motif motif lies at 318-322 (EGMGR).

The protein belongs to the damage-control phosphatase family. Phosphopantetheine phosphatase II subfamily. Multimer. Mn(2+) serves as cofactor. Ni(2+) is required as a cofactor.

Activity is strongly promoted by Co(2+), Ni(2+), Mg(2+), Cu(2+) and Mn(2+). Activity is inhibited by EDTA. Metal-dependent phosphatase with probable damage-control functions. Shows phosphatase activity against several substrates, including sugar phosphates and p-nitrophenyl phosphate(pNPP). Prefers sugar phosphate substrates, including the extremely potent glycating agents ribose-5-phosphate and erythrose-4-phosphate. This Arabidopsis thaliana (Mouse-ear cress) protein is Damage-control phosphatase At2g17340.